We begin with the raw amino-acid sequence, 217 residues long: Thiamine-phosphate synthase (217 aa).

Residues 41-45 (QYRDK) and N76 each bind 4-amino-2-methyl-5-(diphosphooxymethyl)pyrimidine. Residues D77 and D96 each contribute to the Mg(2+) site. S115 serves as a coordination point for 4-amino-2-methyl-5-(diphosphooxymethyl)pyrimidine. 142-144 (SPS) contributes to the 2-[(2R,5Z)-2-carboxy-4-methylthiazol-5(2H)-ylidene]ethyl phosphate binding site. Position 145 (K145) interacts with 4-amino-2-methyl-5-(diphosphooxymethyl)pyrimidine. 2-[(2R,5Z)-2-carboxy-4-methylthiazol-5(2H)-ylidene]ethyl phosphate-binding positions include G172 and 192–193 (IS).

Belongs to the thiamine-phosphate synthase family. Mg(2+) is required as a cofactor.

It catalyses the reaction 2-[(2R,5Z)-2-carboxy-4-methylthiazol-5(2H)-ylidene]ethyl phosphate + 4-amino-2-methyl-5-(diphosphooxymethyl)pyrimidine + 2 H(+) = thiamine phosphate + CO2 + diphosphate. The catalysed reaction is 2-(2-carboxy-4-methylthiazol-5-yl)ethyl phosphate + 4-amino-2-methyl-5-(diphosphooxymethyl)pyrimidine + 2 H(+) = thiamine phosphate + CO2 + diphosphate. It carries out the reaction 4-methyl-5-(2-phosphooxyethyl)-thiazole + 4-amino-2-methyl-5-(diphosphooxymethyl)pyrimidine + H(+) = thiamine phosphate + diphosphate. It functions in the pathway cofactor biosynthesis; thiamine diphosphate biosynthesis; thiamine phosphate from 4-amino-2-methyl-5-diphosphomethylpyrimidine and 4-methyl-5-(2-phosphoethyl)-thiazole: step 1/1. Its function is as follows. Condenses 4-methyl-5-(beta-hydroxyethyl)thiazole monophosphate (THZ-P) and 2-methyl-4-amino-5-hydroxymethyl pyrimidine pyrophosphate (HMP-PP) to form thiamine monophosphate (TMP). The chain is Thiamine-phosphate synthase from Acidithiobacillus ferrooxidans (strain ATCC 23270 / DSM 14882 / CIP 104768 / NCIMB 8455) (Ferrobacillus ferrooxidans (strain ATCC 23270)).